Consider the following 154-residue polypeptide: Transcription antitermination protein NusB (154 aa).

This sequence belongs to the NusB family.

In terms of biological role, involved in transcription antitermination. Required for transcription of ribosomal RNA (rRNA) genes. Binds specifically to the boxA antiterminator sequence of the ribosomal RNA (rrn) operons. The chain is Transcription antitermination protein NusB from Oleidesulfovibrio alaskensis (strain ATCC BAA-1058 / DSM 17464 / G20) (Desulfovibrio alaskensis).